Here is a 179-residue protein sequence, read N- to C-terminus: Putative FBD-associated F-box protein At3g12840 (179 aa).

The F-box domain maps to 14 to 60 (AARINDLPDDLLATVLSFVPTKDAVATSILSKRWRPIWKRAVNLESD). Residues 101 to 152 (KWKQPDFVPLSLYRSLEAFEWIGFKGREKTEKKAAFHILRNACNLKTMAITT) form the FBD domain.

The protein is Putative FBD-associated F-box protein At3g12840 of Arabidopsis thaliana (Mouse-ear cress).